A 426-amino-acid polypeptide reads, in one-letter code: Glutamate-1-semialdehyde 2,1-aminomutase (426 aa).

The residue at position 265 (Lys-265) is an N6-(pyridoxal phosphate)lysine.

It belongs to the class-III pyridoxal-phosphate-dependent aminotransferase family. HemL subfamily. As to quaternary structure, homodimer. The cofactor is pyridoxal 5'-phosphate.

It localises to the cytoplasm. It carries out the reaction (S)-4-amino-5-oxopentanoate = 5-aminolevulinate. It participates in porphyrin-containing compound metabolism; protoporphyrin-IX biosynthesis; 5-aminolevulinate from L-glutamyl-tRNA(Glu): step 2/2. This Erwinia tasmaniensis (strain DSM 17950 / CFBP 7177 / CIP 109463 / NCPPB 4357 / Et1/99) protein is Glutamate-1-semialdehyde 2,1-aminomutase.